The primary structure comprises 185 residues: Ribosome-recycling factor (185 aa).

It belongs to the RRF family.

It is found in the cytoplasm. Responsible for the release of ribosomes from messenger RNA at the termination of protein biosynthesis. May increase the efficiency of translation by recycling ribosomes from one round of translation to another. The sequence is that of Ribosome-recycling factor from Pseudomonas putida (strain W619).